A 101-amino-acid polypeptide reads, in one-letter code: NADH-quinone oxidoreductase subunit K (101 aa).

The next 3 membrane-spanning stretches (helical) occupy residues 4–24 (LAHY…GIFL), 30–50 (IVLL…FVAF), and 61–81 (VFVF…LAIL).

It belongs to the complex I subunit 4L family. NDH-1 is composed of 14 different subunits. Subunits NuoA, H, J, K, L, M, N constitute the membrane sector of the complex.

Its subcellular location is the cell inner membrane. It catalyses the reaction a quinone + NADH + 5 H(+)(in) = a quinol + NAD(+) + 4 H(+)(out). In terms of biological role, NDH-1 shuttles electrons from NADH, via FMN and iron-sulfur (Fe-S) centers, to quinones in the respiratory chain. The immediate electron acceptor for the enzyme in this species is believed to be ubiquinone. Couples the redox reaction to proton translocation (for every two electrons transferred, four hydrogen ions are translocated across the cytoplasmic membrane), and thus conserves the redox energy in a proton gradient. This chain is NADH-quinone oxidoreductase subunit K, found in Ralstonia nicotianae (strain ATCC BAA-1114 / GMI1000) (Ralstonia solanacearum).